Consider the following 534-residue polypeptide: uncharacterized protein (534 aa).

The first 22 residues, 1–22 (MGLRLLFSLICVFCISNIFTQA), serve as a signal peptide directing secretion. The N-linked (GlcNAc...) asparagine glycan is linked to Asn31. 2 disordered regions span residues 70 to 145 (PTYY…SSVS) and 176 to 418 (SSLS…SSAP). N-linked (GlcNAc...) asparagine glycosylation occurs at Asn426.

It localises to the endoplasmic reticulum. Its subcellular location is the cell membrane. This is an uncharacterized protein from Schizosaccharomyces pombe (strain 972 / ATCC 24843) (Fission yeast).